Here is a 204-residue protein sequence, read N- to C-terminus: Holliday junction branch migration complex subunit RuvA (204 aa).

Residues 1–64 (MIGRLQGILL…EDAHLLFGFA (64 aa)) form a domain I region. The tract at residues 65–143 (QKTDRTLFRE…GIKQSDFFVE (79 aa)) is domain II. The flexible linker stretch occupies residues 144–155 (STHIPLSPSIES). Residues 156–204 (HSESSSDEAISALIALGYKPAEAEKMVKRVAKPELTSEQVIREALKAAL) are domain III.

It belongs to the RuvA family. In terms of assembly, homotetramer. Forms an RuvA(8)-RuvB(12)-Holliday junction (HJ) complex. HJ DNA is sandwiched between 2 RuvA tetramers; dsDNA enters through RuvA and exits via RuvB. An RuvB hexamer assembles on each DNA strand where it exits the tetramer. Each RuvB hexamer is contacted by two RuvA subunits (via domain III) on 2 adjacent RuvB subunits; this complex drives branch migration. In the full resolvosome a probable DNA-RuvA(4)-RuvB(12)-RuvC(2) complex forms which resolves the HJ.

The protein localises to the cytoplasm. Functionally, the RuvA-RuvB-RuvC complex processes Holliday junction (HJ) DNA during genetic recombination and DNA repair, while the RuvA-RuvB complex plays an important role in the rescue of blocked DNA replication forks via replication fork reversal (RFR). RuvA specifically binds to HJ cruciform DNA, conferring on it an open structure. The RuvB hexamer acts as an ATP-dependent pump, pulling dsDNA into and through the RuvAB complex. HJ branch migration allows RuvC to scan DNA until it finds its consensus sequence, where it cleaves and resolves the cruciform DNA. The polypeptide is Holliday junction branch migration complex subunit RuvA (Haemophilus influenzae (strain 86-028NP)).